The chain runs to 92 residues: Small ribosomal subunit protein uS19 (92 aa).

It belongs to the universal ribosomal protein uS19 family.

Protein S19 forms a complex with S13 that binds strongly to the 16S ribosomal RNA. The polypeptide is Small ribosomal subunit protein uS19 (Streptococcus agalactiae serotype Ia (strain ATCC 27591 / A909 / CDC SS700)).